The sequence spans 512 residues: Cytoplasmic tRNA 2-thiolation protein 2-B (512 aa).

The interval 196-215 is disordered; it reads VTDSDSPGSSDKMYQSTCSR. Residues 199–214 are compositionally biased toward polar residues; it reads SDSPGSSDKMYQSTCS.

It belongs to the CTU2/NCS2 family.

It localises to the cytoplasm. The protein operates within tRNA modification; 5-methoxycarbonylmethyl-2-thiouridine-tRNA biosynthesis. Functionally, plays a central role in 2-thiolation of mcm(5)S(2)U at tRNA wobble positions of tRNA(Lys), tRNA(Glu) and tRNA(Gln). May act by forming a heterodimer with ctu1/atpbd3 that ligates sulfur from thiocarboxylated urm1 onto the uridine of tRNAs at wobble position. The sequence is that of Cytoplasmic tRNA 2-thiolation protein 2-B (ctu2-b) from Xenopus laevis (African clawed frog).